Reading from the N-terminus, the 236-residue chain is Probable apoptosis inhibitor 2 (236 aa).

A BIR repeat occupies 85–150; that stretch reads RKRSFASFKW…AHAADCAFRR (66 aa). Zn(2+)-binding residues include cysteine 123, cysteine 126, histidine 142, and cysteine 146. The RING-type zinc finger occupies 189–223; the sequence is CKVCFVNEKSVCFLPCRHLVVCAECSPRCKRCCVC.

The polypeptide is Probable apoptosis inhibitor 2 (IAP2) (Orgyia pseudotsugata multicapsid polyhedrosis virus (OpMNPV)).